We begin with the raw amino-acid sequence, 357 residues long: MSDQQTCVIDNGSGVVKAGFAGEDAPRAVFPSIVGRPKNVSALIGVDSASEYLGDEAQQKRGVLKIWNHTFYVELRVQPDEHPILLTEAPLSPKTNREKMTQIMFETFNVPALYVAIQAVLSLYSRGRTTGIVCDAGDGVTHTVPIYEGFSIPHAVSRIQLAGRDLTTFLAKLLTERGYNFTSSAELEIVRDIKEKLCFVALNYESALKQSHDSSQFEKNYELPDGKVITIGSERFRCPEYLFKPLEMNGRELDSIQDLTYKSIQECDVDVRRDLYQNIILSGGTTMYEGIGERLLKEIENRAPKSINVKVIASPDRRFAVWRGGSTLTSLSTFASMWITKEDYDENGASIVHRKCI.

The protein belongs to the actin family. Post-translationally, met-1 may be removed after translation.

Its subcellular location is the cytoplasm. It is found in the cytoskeleton. It catalyses the reaction ATP + H2O = ADP + phosphate + H(+). In terms of biological role, actins are highly conserved proteins that are involved in various types of cell motility and are ubiquitously expressed in all eukaryotic cells. In Oxytricha fallax, this protein is Actin, cytoplasmic.